Reading from the N-terminus, the 468-residue chain is Glutamate--tRNA ligase (468 aa).

The 'HIGH' region signature appears at 8-18 (PSPTGFLHVGG). Positions 97, 99, 124, and 126 each coordinate Zn(2+). Positions 236–240 (KLSKR) match the 'KMSKS' region motif. ATP is bound at residue Lys-239.

The protein belongs to the class-I aminoacyl-tRNA synthetase family. Glutamate--tRNA ligase type 1 subfamily. As to quaternary structure, monomer. The cofactor is Zn(2+).

It is found in the cytoplasm. It catalyses the reaction tRNA(Glu) + L-glutamate + ATP = L-glutamyl-tRNA(Glu) + AMP + diphosphate. Functionally, catalyzes the attachment of glutamate to tRNA(Glu) in a two-step reaction: glutamate is first activated by ATP to form Glu-AMP and then transferred to the acceptor end of tRNA(Glu). This Francisella tularensis subsp. novicida (strain U112) protein is Glutamate--tRNA ligase.